Consider the following 356-residue polypeptide: Deoxyribonuclease-2-beta (356 aa).

The N-terminal stretch at 1-22 (MTAQPLKAALPLLFVALSGVLG) is a signal peptide. N-linked (GlcNAc...) asparagine glycosylation is found at Asn77, Asn98, Asn114, and Asn273.

It belongs to the DNase II family. In terms of tissue distribution, liver specific.

The protein localises to the lysosome. It catalyses the reaction Endonucleolytic cleavage to nucleoside 3'-phosphates and 3'-phosphooligonucleotide end-products.. Hydrolyzes DNA under acidic conditions. Does not require divalent cations for activity. Participates in the degradation of nuclear DNA during lens cell differentiation. This chain is Deoxyribonuclease-2-beta (Dnase2b), found in Rattus norvegicus (Rat).